The following is a 133-amino-acid chain: Putative pre-16S rRNA nuclease (133 aa).

This sequence belongs to the YqgF nuclease family.

It is found in the cytoplasm. Could be a nuclease involved in processing of the 5'-end of pre-16S rRNA. In Dehalococcoides mccartyi (strain ATCC BAA-2266 / KCTC 15142 / 195) (Dehalococcoides ethenogenes (strain 195)), this protein is Putative pre-16S rRNA nuclease.